The primary structure comprises 254 residues: MVTAAGSPSSSSARKPASRPRLPCRDILVHIEAYLSRRDGVDNLLKVSLYAARLALALAAGQPPLPHAATARLRSFESSVGLSRKAFRLGKFVQSINALRAAAYHPHPHVHPLLVLLAYGGQGVYNFLEQFAWLAKAGLLPARLLPRRLHRIGVWAQLLAHVGSIAIKLEEVAELECGVEARLEEGCGEESEVVRTLSRKLLLKLMSLVQDMVDSAMTVGDVTGRKGLLGSSTLMASAGLLSALISVHKNWNSC.

The Cytoplasmic portion of the chain corresponds to 1–113 (MVTAAGSPSS…YHPHPHVHPL (113 aa)). Residues 114–134 (LVLLAYGGQGVYNFLEQFAWL) traverse the membrane as a helical segment. At 135-227 (AKAGLLPARL…TVGDVTGRKG (93 aa)) the chain is on the lumenal side. The chain crosses the membrane as a helical span at residues 228–247 (LLGSSTLMASAGLLSALISV). Over 248–254 (HKNWNSC) the chain is Cytoplasmic.

This sequence belongs to the peroxin-11 family.

Its subcellular location is the peroxisome membrane. Involved in peroxisomal proliferation. The sequence is that of Peroxisomal membrane protein 11-2 (PEX11-2) from Oryza sativa subsp. japonica (Rice).